Reading from the N-terminus, the 315-residue chain is Ribose-phosphate pyrophosphokinase (315 aa).

Residues 37–39 and 96–97 contribute to the ATP site; these read DGE and RQ. 2 residues coordinate Mg(2+): His-131 and Asp-170. Lys-194 is an active-site residue. D-ribose 5-phosphate-binding positions include Arg-196, Asp-220, and 224–228; that span reads DTGGT.

The protein belongs to the ribose-phosphate pyrophosphokinase family. Class I subfamily. As to quaternary structure, homohexamer. The cofactor is Mg(2+).

It localises to the cytoplasm. The catalysed reaction is D-ribose 5-phosphate + ATP = 5-phospho-alpha-D-ribose 1-diphosphate + AMP + H(+). It participates in metabolic intermediate biosynthesis; 5-phospho-alpha-D-ribose 1-diphosphate biosynthesis; 5-phospho-alpha-D-ribose 1-diphosphate from D-ribose 5-phosphate (route I): step 1/1. Functionally, involved in the biosynthesis of the central metabolite phospho-alpha-D-ribosyl-1-pyrophosphate (PRPP) via the transfer of pyrophosphoryl group from ATP to 1-hydroxyl of ribose-5-phosphate (Rib-5-P). The chain is Ribose-phosphate pyrophosphokinase from Shewanella oneidensis (strain ATCC 700550 / JCM 31522 / CIP 106686 / LMG 19005 / NCIMB 14063 / MR-1).